The following is a 275-amino-acid chain: Energy-coupling factor transporter ATP-binding protein EcfA1 (275 aa).

An ABC transporter domain is found at 5-240; that stretch reads IDVKNLSFRY…NDLDQIGLDD (236 aa). 40 to 47 provides a ligand contact to ATP; it reads GHNGSGKS.

It belongs to the ABC transporter superfamily. Energy-coupling factor EcfA family. As to quaternary structure, forms a stable energy-coupling factor (ECF) transporter complex composed of 2 membrane-embedded substrate-binding proteins (S component), 2 ATP-binding proteins (A component) and 2 transmembrane proteins (T component).

It localises to the cell membrane. ATP-binding (A) component of a common energy-coupling factor (ECF) ABC-transporter complex. Unlike classic ABC transporters this ECF transporter provides the energy necessary to transport a number of different substrates. The chain is Energy-coupling factor transporter ATP-binding protein EcfA1 from Streptococcus pneumoniae serotype 4 (strain ATCC BAA-334 / TIGR4).